Reading from the N-terminus, the 257-residue chain is Probable enoyl-CoA hydratase echA8 (257 aa).

The protein belongs to the enoyl-CoA hydratase/isomerase family.

The enzyme catalyses a (3S)-3-hydroxyacyl-CoA = a (2E)-enoyl-CoA + H2O. It catalyses the reaction a 4-saturated-(3S)-3-hydroxyacyl-CoA = a (3E)-enoyl-CoA + H2O. Functionally, could possibly oxidize fatty acids using specific components. In Mycobacterium tuberculosis (strain CDC 1551 / Oshkosh), this protein is Probable enoyl-CoA hydratase echA8 (echA8).